A 96-amino-acid chain; its full sequence is Protein RnfH (96 aa).

Belongs to the UPF0125 (RnfH) family.

The protein is Protein RnfH of Escherichia coli O81 (strain ED1a).